Consider the following 256-residue polypeptide: Omega-amidase YafV (256 aa).

The region spanning leucine 4 to methionine 234 is the CN hydrolase domain. Glutamate 42 functions as the Proton acceptor in the catalytic mechanism. Residue lysine 107 is the Proton donor of the active site. The Nucleophile role is filled by cysteine 141.

Belongs to the carbon-nitrogen hydrolase superfamily. NIT1/NIT2 family.

It catalyses the reaction a monoamide of a dicarboxylate + H2O = a dicarboxylate + NH4(+). In terms of biological role, hydrolyzes alpha-ketoglutaramate (a-KGM) to alpha-ketoglutarate (alpha-KG) and ammonia, has weak activity on L-glutamine, almost no activity on deaminated glutathione (dGSH) and none on glutathione. May function as a metabolite repair enzyme. The polypeptide is Omega-amidase YafV (yafV) (Escherichia coli (strain K12)).